Here is a 327-residue protein sequence, read N- to C-terminus: Lipoyl synthase (327 aa).

[4Fe-4S] cluster is bound by residues C72, C77, C83, C98, C102, C105, and S313. The 220-residue stretch at 83 to 302 (CWSHGTATIM…RKVGLEKGFL (220 aa)) folds into the Radical SAM core domain.

This sequence belongs to the radical SAM superfamily. Lipoyl synthase family. [4Fe-4S] cluster is required as a cofactor.

It is found in the cytoplasm. The catalysed reaction is [[Fe-S] cluster scaffold protein carrying a second [4Fe-4S](2+) cluster] + N(6)-octanoyl-L-lysyl-[protein] + 2 oxidized [2Fe-2S]-[ferredoxin] + 2 S-adenosyl-L-methionine + 4 H(+) = [[Fe-S] cluster scaffold protein] + N(6)-[(R)-dihydrolipoyl]-L-lysyl-[protein] + 4 Fe(3+) + 2 hydrogen sulfide + 2 5'-deoxyadenosine + 2 L-methionine + 2 reduced [2Fe-2S]-[ferredoxin]. The protein operates within protein modification; protein lipoylation via endogenous pathway; protein N(6)-(lipoyl)lysine from octanoyl-[acyl-carrier-protein]: step 2/2. In terms of biological role, catalyzes the radical-mediated insertion of two sulfur atoms into the C-6 and C-8 positions of the octanoyl moiety bound to the lipoyl domains of lipoate-dependent enzymes, thereby converting the octanoylated domains into lipoylated derivatives. The polypeptide is Lipoyl synthase (Francisella tularensis subsp. novicida (strain U112)).